A 76-amino-acid chain; its full sequence is Omega-conotoxin-like TxO3 (76 aa).

The first 22 residues, 1–22, serve as a signal peptide directing secretion; it reads MKLTCVVIVAVLFLTAWTFVTA. The propeptide occupies 23–52; it reads VPHSSNALENLYLKAHHEMNNPEASELNKR. Intrachain disulfides connect Cys-53–Cys-67, Cys-60–Cys-71, and Cys-66–Cys-75.

The protein belongs to the conotoxin O1 superfamily. As to expression, expressed by the venom duct.

The protein resides in the secreted. Functionally, omega-conotoxins act at presynaptic membranes, they bind and block voltage-gated calcium channels (Cav). The protein is Omega-conotoxin-like TxO3 (TXO3) of Conus textile (Cloth-of-gold cone).